Here is an 89-residue protein sequence, read N- to C-terminus: Small ribosomal subunit protein uS15 (89 aa).

It belongs to the universal ribosomal protein uS15 family. As to quaternary structure, part of the 30S ribosomal subunit. Forms a bridge to the 50S subunit in the 70S ribosome, contacting the 23S rRNA.

One of the primary rRNA binding proteins, it binds directly to 16S rRNA where it helps nucleate assembly of the platform of the 30S subunit by binding and bridging several RNA helices of the 16S rRNA. Its function is as follows. Forms an intersubunit bridge (bridge B4) with the 23S rRNA of the 50S subunit in the ribosome. In Herminiimonas arsenicoxydans, this protein is Small ribosomal subunit protein uS15.